Consider the following 387-residue polypeptide: Ferrochelatase (387 aa).

Fe cation contacts are provided by histidine 196 and glutamate 277.

Belongs to the ferrochelatase family.

It is found in the cytoplasm. The catalysed reaction is heme b + 2 H(+) = protoporphyrin IX + Fe(2+). Its pathway is porphyrin-containing compound metabolism; protoheme biosynthesis; protoheme from protoporphyrin-IX: step 1/1. Functionally, catalyzes the ferrous insertion into protoporphyrin IX. The polypeptide is Ferrochelatase (Synechococcus sp. (strain RCC307)).